A 92-amino-acid polypeptide reads, in one-letter code: MAKRTKKVGIVGKYGTRYGASIRKQIKKMEVSQHSKYFCEFCGKYGVKRKAVGIWGCKDCGKVKAGGAYTMNTASAVTVRSTIRRLREQIEG.

Residues 39–60 (CEFCGKYGVKRKAVGIWGCKDC) form a C4-type zinc finger.

It belongs to the eukaryotic ribosomal protein eL43 family.

The protein is Large ribosomal subunit protein eL43y (RPL37AC) of Arabidopsis thaliana (Mouse-ear cress).